The primary structure comprises 1590 residues: von Willebrand factor D and EGF domain-containing protein (1590 aa).

An N-terminal signal peptide occupies residues Met1–Ala20. Asn367 is a glycosylation site (N-linked (GlcNAc...) asparagine). One can recognise a VWFD domain in the interval Ala423–Met606. Cystine bridges form between Cys425/Cys565 and Cys468/Cys477. N-linked (GlcNAc...) asparagine glycosylation is found at Asn703 and Asn968. The 40-residue stretch at Thr1177–Glu1216 folds into the EGF-like 1 domain. Disulfide bonds link Cys1181–Cys1189, Cys1183–Cys1204, and Cys1206–Cys1215. Positions Asp1268–Ala1280 are enriched in basic and acidic residues. The segment at Asp1268–Lys1288 is disordered. EGF-like domains lie at Ala1294–Gln1326, Asp1358–Glu1390, Ser1422–Gln1454, Asn1455–Gln1486, Asn1518–Gln1550, and Ile1551–Glu1582. 17 cysteine pairs are disulfide-bonded: Cys1298-Cys1308, Cys1302-Cys1314, Cys1316-Cys1325, Cys1362-Cys1372, Cys1366-Cys1378, Cys1380-Cys1389, Cys1426-Cys1436, Cys1430-Cys1442, Cys1444-Cys1453, Cys1458-Cys1468, Cys1462-Cys1474, Cys1522-Cys1532, Cys1526-Cys1538, Cys1540-Cys1549, Cys1554-Cys1564, Cys1558-Cys1570, and Cys1572-Cys1581.

It localises to the secreted. The polypeptide is von Willebrand factor D and EGF domain-containing protein (VWDE) (Homo sapiens (Human)).